Here is a 188-residue protein sequence, read N- to C-terminus: Elongation factor P (188 aa).

It belongs to the elongation factor P family.

The protein resides in the cytoplasm. It functions in the pathway protein biosynthesis; polypeptide chain elongation. In terms of biological role, involved in peptide bond synthesis. Stimulates efficient translation and peptide-bond synthesis on native or reconstituted 70S ribosomes in vitro. Probably functions indirectly by altering the affinity of the ribosome for aminoacyl-tRNA, thus increasing their reactivity as acceptors for peptidyl transferase. The chain is Elongation factor P from Rhodopseudomonas palustris (strain TIE-1).